Reading from the N-terminus, the 121-residue chain is Ribonuclease P protein component (121 aa).

It belongs to the RnpA family. Consists of a catalytic RNA component (M1 or rnpB) and a protein subunit.

It carries out the reaction Endonucleolytic cleavage of RNA, removing 5'-extranucleotides from tRNA precursor.. Its function is as follows. RNaseP catalyzes the removal of the 5'-leader sequence from pre-tRNA to produce the mature 5'-terminus. It can also cleave other RNA substrates such as 4.5S RNA. The protein component plays an auxiliary but essential role in vivo by binding to the 5'-leader sequence and broadening the substrate specificity of the ribozyme. The chain is Ribonuclease P protein component from Geobacillus thermodenitrificans (strain NG80-2).